The sequence spans 120 residues: MIF-like protein mif-2 (120 aa).

This sequence belongs to the MIF family.

The polypeptide is MIF-like protein mif-2 (mif-2) (Caenorhabditis elegans).